The primary structure comprises 257 residues: 5'-nucleotidase SurE (257 aa).

D15, D16, S46, and N99 together coordinate a divalent metal cation.

It belongs to the SurE nucleotidase family. The cofactor is a divalent metal cation.

The protein localises to the cytoplasm. It catalyses the reaction a ribonucleoside 5'-phosphate + H2O = a ribonucleoside + phosphate. Its function is as follows. Nucleotidase that shows phosphatase activity on nucleoside 5'-monophosphates. The protein is 5'-nucleotidase SurE of Aliivibrio fischeri (strain ATCC 700601 / ES114) (Vibrio fischeri).